Here is a 351-residue protein sequence, read N- to C-terminus: ATP-dependent 6-phosphofructokinase subunit gamma (351 aa).

Heterododecamer of 4 alpha, 4 beta and 4 gamma chains. The gamma chain bridges the N-terminal halves of the alpha and beta subunits.

The protein resides in the cytoplasm. It functions in the pathway carbohydrate degradation; glycolysis; D-glyceraldehyde 3-phosphate and glycerone phosphate from D-glucose: step 3/4. Structural subunit of pyrophosphate--fructose 6-phosphate 1-phosphotransferase. Not required for catalytic activity. Fine-tunes allosteric regulation of the ATP-PFK by ATP, fructose 2,6-bisphosphate and AMP. This chain is ATP-dependent 6-phosphofructokinase subunit gamma (PFK3), found in Komagataella pastoris (Yeast).